We begin with the raw amino-acid sequence, 218 residues long: MSDNDELQQIAHLRREYTKGGLRRRDLPADPLTLFERWLSQACEAKLADPTAMVVATVDEHAQPYQRIVLLKHYDEKGMVFYTNLGSRKAHQIENNPRVSLLFPWHTLERQVMVIGKAERLSTLEVMKYFHSRPRDSQIGAWVSKQSSRISARGILESKFLELKQKFQQGEVPLPSFWGGFRVSLEQIEFWQGGEHRLHDRFLYQRENDAWKIDRLAP.

Substrate contacts are provided by residues R14–Y17 and K72. Residues R67 to K72, Y82 to T83, R88, K89, and Q111 contribute to the FMN site. Substrate is bound by residues Y129, R133, and S137. FMN-binding positions include Q146 to S147 and W191. R197 to H199 provides a ligand contact to substrate. An FMN-binding site is contributed by R201.

It belongs to the pyridoxamine 5'-phosphate oxidase family. Homodimer. Requires FMN as cofactor.

It catalyses the reaction pyridoxamine 5'-phosphate + O2 + H2O = pyridoxal 5'-phosphate + H2O2 + NH4(+). The enzyme catalyses pyridoxine 5'-phosphate + O2 = pyridoxal 5'-phosphate + H2O2. The protein operates within cofactor metabolism; pyridoxal 5'-phosphate salvage; pyridoxal 5'-phosphate from pyridoxamine 5'-phosphate: step 1/1. Its pathway is cofactor metabolism; pyridoxal 5'-phosphate salvage; pyridoxal 5'-phosphate from pyridoxine 5'-phosphate: step 1/1. Functionally, catalyzes the oxidation of either pyridoxine 5'-phosphate (PNP) or pyridoxamine 5'-phosphate (PMP) into pyridoxal 5'-phosphate (PLP). The polypeptide is Pyridoxine/pyridoxamine 5'-phosphate oxidase (Escherichia coli (strain 55989 / EAEC)).